Reading from the N-terminus, the 341-residue chain is KH domain-containing RNA-binding protein QKI (341 aa).

Positions 11-82 (PKPTPDYLMQ…PDAVGPIVQL (72 aa)) are qua1 domain; involved in homodimerization. The KH domain maps to 87-153 (YVPVKEYPDF…WEHLNEDLHV (67 aa)). The qua2 domain; involved in RNA binding stretch occupies residues 182-213 (AAEGEDSLKKMQLMELAILNGTYRDANIKSPA). The residue at position 188 (Ser188) is a Phosphoserine. An Omega-N-methylarginine modification is found at Arg227. Arg242 bears the Asymmetric dimethylarginine; by CARM1; alternate mark. The residue at position 242 (Arg242) is an Omega-N-methylarginine; alternate. Omega-N-methylarginine is present on Arg256. The short motif at 276–279 (PPGP) is the SH3-binding element. Residues 324–330 (RVHPYQR) carry the Nuclear localization signal motif.

This sequence belongs to the quaking family. Homodimer; does not require RNA to homodimerize. Able to heterodimerize with BICC1. Post-translationally, methylated by PRMT1. In terms of processing, tyrosine phosphorylated at its C-terminus, probably by FYN. Phosphorylation leads to decreased mRNA-binding affinity, affecting transport and/or stabilization of MBP mRNA. Ubiquitinated by RNF6 in macrophages, leading to its degradation.

It localises to the nucleus. The protein localises to the cytoplasm. Its function is as follows. RNA reader protein, which recognizes and binds specific RNAs, thereby regulating RNA metabolic processes, such as pre-mRNA splicing, circular RNA (circRNA) formation, mRNA export, mRNA stability and/or translation. Involved in various cellular processes, such as mRNA storage into stress granules, apoptosis, lipid deposition, interferon response, glial cell fate and development. Binds to the 5'-NACUAAY-N(1,20)-UAAY-3' RNA core sequence. Acts as a mRNA modification reader that specifically recognizes and binds mRNA transcripts modified by internal N(7)-methylguanine (m7G). Promotes the formation of circular RNAs (circRNAs) during the epithelial to mesenchymal transition and in cardiomyocytes: acts by binding to sites flanking circRNA-forming exons. CircRNAs are produced by back-splicing circularization of pre-mRNAs. Plays a central role in myelinization via 3 distinct mechanisms. First, acts by protecting and promoting stability of target mRNAs such as MBP, SIRT2 and CDKN1B, which promotes oligodendrocyte differentiation. Second, participates in mRNA transport by regulating the nuclear export of MBP mRNA. Finally, indirectly regulates mRNA splicing of MAG pre-mRNA during oligodendrocyte differentiation by acting as a negative regulator of MAG exon 12 alternative splicing: acts by binding to HNRNPA1 mRNA splicing factor, preventing its translation. Involved in microglia differentiation and remyelination by regulating microexon alternative splicing of the Rho GTPase pathway. Involved in macrophage differentiation: promotes monocyte differentiation by regulating pre-mRNA splicing in naive peripheral blood monocytes. Acts as an important regulator of muscle development: required for the contractile function of cardiomyocytes by regulating alternative splicing of cardiomyocyte transcripts. Acts as a negative regulator of thermogenesis by decreasing stability, nuclear export and translation of mRNAs encoding PPARGC1A and UCP1. Also required for visceral endoderm function and blood vessel development. May also play a role in smooth muscle development. In addition to its RNA-binding activity, also acts as a nuclear transcription coactivator for SREBF2/SREBP2. This is KH domain-containing RNA-binding protein QKI from Bos taurus (Bovine).